We begin with the raw amino-acid sequence, 103 residues long: Small ribosomal subunit protein uS14c (103 aa).

Residues Lys34–Asn56 are disordered.

This sequence belongs to the universal ribosomal protein uS14 family. Part of the 30S ribosomal subunit.

The protein localises to the plastid. It localises to the chloroplast. Functionally, binds 16S rRNA, required for the assembly of 30S particles. The sequence is that of Small ribosomal subunit protein uS14c from Triticum aestivum (Wheat).